The primary structure comprises 469 residues: Ubiquitin carboxyl-terminal hydrolase MINDY-1 (469 aa).

The segment at 1–85 (MEHHQPEDPA…APPGPTLGTL (85 aa)) is disordered. The span at 34-53 (HPQDTDARDADGEAGEREPA) shows a compositional bias: basic and acidic residues. S103 is modified (phosphoserine). The Nucleophile role is filled by C137. H319 (proton acceptor) is an active-site residue. Residues 388–426 (QVDQDYLIALSLQQQQPRGTLGLTDLELAQQLQQEEYQQ) are ubiquitin-binding domain (UBD). Residues 428-469 (QAAQPVWMRTRALSPQGRGATSGRPAGERRQRPKHESDCILL) form a disordered region. S441 is subject to Phosphoserine. The span at 453–469 (AGERRQRPKHESDCILL) shows a compositional bias: basic and acidic residues.

This sequence belongs to the MINDY deubiquitinase family. FAM63 subfamily.

It carries out the reaction Thiol-dependent hydrolysis of ester, thioester, amide, peptide and isopeptide bonds formed by the C-terminal Gly of ubiquitin (a 76-residue protein attached to proteins as an intracellular targeting signal).. Its function is as follows. Hydrolase that can specifically remove 'Lys-48'-linked conjugated ubiquitin from proteins. Has exodeubiquitinase activity and has a preference for long polyubiquitin chains. May play a regulatory role at the level of protein turnover. The protein is Ubiquitin carboxyl-terminal hydrolase MINDY-1 (MINDY1) of Pongo abelii (Sumatran orangutan).